The sequence spans 465 residues: L-cystine uptake protein TcyP (465 aa).

The next 10 membrane-spanning stretches (helical) occupy residues 3-23 (LFLT…LFYM), 34-54 (VLLA…FFAP), 73-93 (YVRF…LSAF), 105-125 (ISAL…AIGI), 184-204 (PTSA…YLGV), 224-246 (AIIM…AIMT), 263-283 (FVLA…IILA), 338-358 (LSIG…VMIA), 370-390 (FILL…GVGG), and 394-414 (FAAI…GLLI).

This sequence belongs to the dicarboxylate/amino acid:cation symporter (DAACS) (TC 2.A.23) family.

Its subcellular location is the membrane. In terms of biological role, mediates uptake of L-cystine, the oxidized form of L-cysteine. In Shouchella clausii (strain KSM-K16) (Alkalihalobacillus clausii), this protein is L-cystine uptake protein TcyP.